Here is a 107-residue protein sequence, read N- to C-terminus: Nucleoid-associated protein RP866 (107 aa).

This sequence belongs to the YbaB/EbfC family. In terms of assembly, homodimer.

It is found in the cytoplasm. It localises to the nucleoid. Functionally, binds to DNA and alters its conformation. May be involved in regulation of gene expression, nucleoid organization and DNA protection. The polypeptide is Nucleoid-associated protein RP866 (Rickettsia prowazekii (strain Madrid E)).